The sequence spans 466 residues: 3-isopropylmalate dehydratase large subunit (466 aa).

[4Fe-4S] cluster-binding residues include Cys347, Cys407, and Cys410.

Belongs to the aconitase/IPM isomerase family. LeuC type 1 subfamily. Heterodimer of LeuC and LeuD. Requires [4Fe-4S] cluster as cofactor.

The catalysed reaction is (2R,3S)-3-isopropylmalate = (2S)-2-isopropylmalate. Its pathway is amino-acid biosynthesis; L-leucine biosynthesis; L-leucine from 3-methyl-2-oxobutanoate: step 2/4. Functionally, catalyzes the isomerization between 2-isopropylmalate and 3-isopropylmalate, via the formation of 2-isopropylmaleate. This is 3-isopropylmalate dehydratase large subunit from Shewanella sediminis (strain HAW-EB3).